We begin with the raw amino-acid sequence, 260 residues long: uncharacterized protein (260 aa).

Transmembrane regions (helical) follow at residues 39–59 (IFYLLFIPLSKNFIYTDLIEA), 68–88 (IIVGIYLSYPIFLYQIWSFLI), 111–131 (FLGSCIGYYLLFPIAFTFFLG), 159–179 (LIFSLSICFQLPVLILFLFKI), 193–213 (FIYLFFFILAAILSPPDILSQ), and 214–234 (FILVIPLILFFEISLFCIKLI).

This sequence belongs to the TatC family.

It localises to the mitochondrion membrane. This is an uncharacterized protein from Reclinomonas americana.